The primary structure comprises 1029 residues: Exportin-T (1029 aa).

This sequence belongs to the exportin family.

It localises to the nucleus. The protein localises to the cytoplasm. Functionally, tRNA nucleus export receptor which facilitates tRNA translocation across the nuclear pore complex. Involved in pre-tRNA splicing, probably by affecting the interaction of pre-tRNA with splicing endonuclease. The sequence is that of Exportin-T (los1) from Aspergillus clavatus (strain ATCC 1007 / CBS 513.65 / DSM 816 / NCTC 3887 / NRRL 1 / QM 1276 / 107).